The following is a 434-amino-acid chain: ATP-dependent protease ATPase subunit HslU (434 aa).

ATP is bound by residues valine 18, 60–65 (GVGKTE), aspartate 247, glutamate 312, and arginine 384.

Belongs to the ClpX chaperone family. HslU subfamily. In terms of assembly, a double ring-shaped homohexamer of HslV is capped on each side by a ring-shaped HslU homohexamer. The assembly of the HslU/HslV complex is dependent on binding of ATP.

The protein resides in the cytoplasm. Its function is as follows. ATPase subunit of a proteasome-like degradation complex; this subunit has chaperone activity. The binding of ATP and its subsequent hydrolysis by HslU are essential for unfolding of protein substrates subsequently hydrolyzed by HslV. HslU recognizes the N-terminal part of its protein substrates and unfolds these before they are guided to HslV for hydrolysis. This is ATP-dependent protease ATPase subunit HslU from Rhodopseudomonas palustris (strain BisB18).